Here is a 382-residue protein sequence, read N- to C-terminus: Exostosin-1 homolog (382 aa).

An N-terminal signal peptide occupies residues Met-1–Leu-20. N-linked (GlcNAc...) asparagine glycosylation is present at Asn-268.

It belongs to the glycosyltransferase 47 family. In terms of assembly, interacts with rib-2.

The protein localises to the endoplasmic reticulum. Its subcellular location is the golgi apparatus. In terms of biological role, required for the biosynthesis of heparan sulfate by positively regulating N-acetylglucosamine transferase II (GlcNAcT-II) and glucuronyl transferase II (GlcAT-II) activities of glycosyltransferase rib-2. Probably not directly involved in chondroitin sulfate biosynthesis but negatively regulates chondroitin sulfate levels. Maternally required for normal ventral epidermal enclosure and for embryo elongation during the early stages of embryonic development. In addition, involved in the elongation of the pharyngeal isthmus and in the organization of the actin cytoskeleton in the pharyngeal muscles during the later stages embryonic development. In adults, regulates egg-laying and the normal morphogenesis of the vulva. Also involved in the directed migration of hermaphrodite-specific neurons. The chain is Exostosin-1 homolog (rib-1) from Caenorhabditis elegans.